Reading from the N-terminus, the 218-residue chain is Ras-related protein Rab-11B (218 aa).

Glycine 2 is subject to N-acetylglycine. Arginine 4 carries the citrulline modification. GTP is bound by residues serine 20, glycine 21, glycine 23, lysine 24, serine 25, asparagine 26, asparagine 37, leucine 38, serine 40, serine 42, and threonine 43. Serine 25 lines the Mg(2+) pocket. The Switch 1 signature appears at 36 to 47; that stretch reads FNLESKSTIGVE. The Mg(2+) site is built by threonine 43 and aspartate 66. The short motif at 67–86 is the Switch 2 element; the sequence is TAGQERYRAITSAYYRGAVG. Residues glycine 69, asparagine 124, lysine 125, aspartate 127, alanine 155, and leucine 156 each contribute to the GTP site. Residues 184–218 are disordered; sequence RAAHDESPGNNVVDISVPPTTDGQRPNKLQCCQSL. Residues cysteine 214 and cysteine 215 are each lipidated (S-geranylgeranyl cysteine). Cysteine 215 is subject to Cysteine methyl ester. Positions 216-218 are cleaved as a propeptide — removed in mature form; the sequence is QSL.

The protein belongs to the small GTPase superfamily. Rab family. As to quaternary structure, interacts with KCNMA1. Interacts with RAB11FIP1, RAB11FIP2, RAB11FIP3 and RAB11FIP4. May interact with TBC1D14. Interacts with ATP6V1E1. Interacts with PI4KB. Interacts (GDP-bound form) with ZFYVE27. Interacts (GDP-bound form) with KIF5A in a ZFYVE27-dependent manner. Interacts with RELCH. Interacts (in GTP-bound form) with TBC1D8B (via domain Rab-GAP TBC). Forms a complex containing RAB11B, ASAP1, Rabin8/RAB3IP, RAP11FIP3 and ARF4. Interacts with WDR44. It depends on Mg(2+) as a cofactor. In terms of processing, citrullinated by PADI4. As to expression, abundantly expressed in brain, heart and testis. Also detected in kidney and pancreatic islets.

The protein localises to the recycling endosome membrane. Its subcellular location is the cytoplasmic vesicle. It is found in the secretory vesicle. The protein resides in the synaptic vesicle membrane. It localises to the phagosome membrane. The catalysed reaction is GTP + H2O = GDP + phosphate + H(+). With respect to regulation, regulated by guanine nucleotide exchange factors (GEFs) which promote the exchange of bound GDP for free GTP. Regulated by GTPase activating proteins (GAPs) which increase the GTP hydrolysis activity. Inhibited by GDP dissociation inhibitors (GDIs) which prevent Rab-GDP dissociation. Functionally, the small GTPases Rab are key regulators of intracellular membrane trafficking, from the formation of transport vesicles to their fusion with membranes. Rabs cycle between an inactive GDP-bound form and an active GTP-bound form that is able to recruit to membranes different set of downstream effectors directly responsible for vesicle formation, movement, tethering and fusion. The small Rab GTPase RAB11B plays a role in endocytic recycling, regulating apical recycling of several transmembrane proteins including cystic fibrosis transmembrane conductance regulator/CFTR, epithelial sodium channel/ENaC, potassium voltage-gated channel, and voltage-dependent L-type calcium channel. May also regulate constitutive and regulated secretion, like insulin granule exocytosis. Required for melanosome transport and release from melanocytes. Also regulates V-ATPase intracellular transport in response to extracellular acidosis. Promotes Rabin8/RAB3IP preciliary vesicular trafficking to mother centriole by forming a ciliary targeting complex containing Rab11, ASAP1, Rabin8/RAB3IP, RAB11FIP3 and ARF4, thereby regulating ciliogenesis initiation. On the contrary, upon LPAR1 receptor signaling pathway activation, interaction with phosphorylated WDR44 prevents Rab11-RAB3IP-RAB11FIP3 complex formation and cilia growth. The protein is Ras-related protein Rab-11B of Mus musculus (Mouse).